Reading from the N-terminus, the 179-residue chain is Peptidyl-tRNA hydrolase (179 aa).

Y15 lines the tRNA pocket. The Proton acceptor role is filled by H20. Residues Y66, N68, and N114 each coordinate tRNA.

It belongs to the PTH family. As to quaternary structure, monomer.

Its subcellular location is the cytoplasm. It catalyses the reaction an N-acyl-L-alpha-aminoacyl-tRNA + H2O = an N-acyl-L-amino acid + a tRNA + H(+). Its function is as follows. Hydrolyzes ribosome-free peptidyl-tRNAs (with 1 or more amino acids incorporated), which drop off the ribosome during protein synthesis, or as a result of ribosome stalling. Catalyzes the release of premature peptidyl moieties from peptidyl-tRNA molecules trapped in stalled 50S ribosomal subunits, and thus maintains levels of free tRNAs and 50S ribosomes. This chain is Peptidyl-tRNA hydrolase, found in Chlamydia muridarum (strain MoPn / Nigg).